A 195-amino-acid polypeptide reads, in one-letter code: Protein LIGHT-DEPENDENT SHORT HYPOCOTYLS 4 (195 aa).

Positions 28 to 38 are enriched in low complexity; sequence TTTSSSSSSSS. Disordered regions lie at residues 28–51 and 162–195; these read TTTS…RYEN and SQAK…SSPN. The ALOG domain maps to 48–175; that stretch reads RYENQKRRDW…ARGISYEKKK (128 aa). The Nuclear localization signal signature appears at 173-177; that stretch reads KKKRK.

It belongs to the plant homeotic and developmental regulators ALOG protein family. Induced by NAC054/CUC1 and NAC098/CUC2 in shoot organ boundary cells.

It is found in the nucleus. Functionally, probable transcription regulator that acts as a developmental regulator by promoting cell growth in response to light. May suppress organ differentiation in the boundary region. The chain is Protein LIGHT-DEPENDENT SHORT HYPOCOTYLS 4 (LSH4) from Arabidopsis thaliana (Mouse-ear cress).